The chain runs to 427 residues: Glutamate-1-semialdehyde 2,1-aminomutase (427 aa).

K265 bears the N6-(pyridoxal phosphate)lysine mark.

Belongs to the class-III pyridoxal-phosphate-dependent aminotransferase family. HemL subfamily. In terms of assembly, homodimer. Requires pyridoxal 5'-phosphate as cofactor.

Its subcellular location is the cytoplasm. It carries out the reaction (S)-4-amino-5-oxopentanoate = 5-aminolevulinate. It participates in porphyrin-containing compound metabolism; protoporphyrin-IX biosynthesis; 5-aminolevulinate from L-glutamyl-tRNA(Glu): step 2/2. The chain is Glutamate-1-semialdehyde 2,1-aminomutase from Burkholderia cenocepacia (strain ATCC BAA-245 / DSM 16553 / LMG 16656 / NCTC 13227 / J2315 / CF5610) (Burkholderia cepacia (strain J2315)).